The primary structure comprises 345 residues: Heat-inducible transcription repressor HrcA (345 aa).

This sequence belongs to the HrcA family.

In terms of biological role, negative regulator of class I heat shock genes (grpE-dnaK-dnaJ and groELS operons). Prevents heat-shock induction of these operons. The chain is Heat-inducible transcription repressor HrcA from Corynebacterium diphtheriae (strain ATCC 700971 / NCTC 13129 / Biotype gravis).